The sequence spans 1355 residues: MSTTTTIPGAAPKKKRNRIPLSCTICRKRKVKCDKTRPHCNQCTKTGVAHLCHYMEQNWAQDAKKEISKDNELKNLKERCKILEEKLARYMHNPAVTASLGASVVNSPVGLSSPVDAPIKLTNSPMVKLEDDTNMVDDMARPVKEHDYDELDLTRQFDLLHIKSNGTIHLGATHWLAIMKGDPYLKLLWTHIFTMREKLLEYYTNGSGHKRRKRQKNGGKCPIDHSKFKAAESEQKNHFVKTTPMVNDTPKSSIGKCPIDHRAMSNPVGVNSNAGQFQPMHPPHTHIVQNKCPVDHKVNDSNLTSANTDNKNAATKKCPINHSKYTKEKMQGAGLNDKPLTKQEVIEKLCQLLPPKRIIMLYIDKFFKHFYPVIPILDELNFKNNINQIFDLNSLISNTIMSTSSDLELEPITSMTLNKPTDYSNLGILIIIMRLVWLSLPMNSCKIDIENPLLNKLRTDHDFKNEDYESGSLASSLRLKDELQLLKYEVDGFALDLVKKHLIKFDEISSISNTNVNMSTIQFAVFFKFYLMNCANASSQGNSAGNFDNESHQILLSSIMMMAFSCGLHRDPDNFPQLNVVSANLTTDNTRSGPPSNSNRNGSETPSVSPKDTNVSIERAKHTWRKVWYYIVSLDVQQSLLLGSPRLIRNLNDISDTKLPSASKIDYVKDIKELIIIKNYTLFYQLDLCIVAVLNHTLNISIAKNVRKFELDALISNLQKLTDGEKGINDVINSLINHGLLSTSEVPIGLQKFDDIYDLPRMEDILLARKSEQEIVGDENERIGQDVDKKLDLPHEMTSKALFFSKHMTLRMLLYLLNYILFTHYEPLGAEDPTTTILAKNYAQKALDYALDGYRNCMLYFVGVSDQNPLFKYMNVILCFHSLDIGHRALQFIICLILRVKCGPLNGLKETQTIFGTSVPSSCNSSSVEDENTEEPNNLNQDNQFQDDLMQNINLDNSDSLAEKLMSRMVLFKQLTEKLAPKYSFSVRVMKSTGFFISLLTTPSGSFGSKKNGSKHKHGVGKLLLSNWKHPKISNIPALLSSDSDQLKKCPVYQDALGFMPSRPSVTNLPSISNVEGLLPNAQANGRMTPQLPPIRSYQPITYSSSHMRVTPNSESDARKLGPDSHQVTNPLIPSPLSPANQQQNQVNVLHMHQQRSMSPAPMPMMNPTAMTTNQNMIPERKYAPHSGAATPILPGTNSDIQQQTQMTRNDPYPTEQFSLPPISSAKNNMAWGTTPESEQGDHLTPNTTTSSLDTPDFEDFIIQNSNFNGLLINPNSLAEAMGSLPSGRDGAILNVNSFKDFTTSTNDKTITPNSADQTDLFSVDMASTDFLPIDNFAIDGFMDSANLDIGSIWE.

Positions Cys23–Cys52 form a DNA-binding region, zn(2)-C6 fungal-type. 3 disordered regions span residues Thr586 to Asn614, Ser918 to Asp942, and Pro1221 to Leu1253. The segment covering Asn589–Ser603 has biased composition (low complexity). A compositionally biased stretch (polar residues) spans Glu604–Asn614. Low complexity predominate over residues Ser918–Ser927. Residues Ser1225–Ser1238 are compositionally biased toward polar residues.

The protein resides in the nucleus. Functionally, transcription factor that contributes to plasma membrane sphingolipid incorporation and membrane permeability, decreasing fluconazole accumulation. Regulates 337 genes under fluconazole stress, including several related to lipid biosynthesis pathways such as RSB1, encoding a sphingoid long-chain base efflux transporter. Associates with the promoter of RSB1 in the region containing two 5'-CCCCTCC-3' motifs and increases its promoter occupancy upon fluconazole stress. The sequence is that of Transcription factor MAR1 from Candida glabrata (strain ATCC 2001 / BCRC 20586 / JCM 3761 / NBRC 0622 / NRRL Y-65 / CBS 138) (Yeast).